The primary structure comprises 596 residues: Elongation factor 4 (596 aa).

Residues K2 to E184 enclose the tr-type G domain. Residues D14 to T19 and N131 to D134 each bind GTP.

Belongs to the TRAFAC class translation factor GTPase superfamily. Classic translation factor GTPase family. LepA subfamily.

It is found in the cell inner membrane. It carries out the reaction GTP + H2O = GDP + phosphate + H(+). Its function is as follows. Required for accurate and efficient protein synthesis under certain stress conditions. May act as a fidelity factor of the translation reaction, by catalyzing a one-codon backward translocation of tRNAs on improperly translocated ribosomes. Back-translocation proceeds from a post-translocation (POST) complex to a pre-translocation (PRE) complex, thus giving elongation factor G a second chance to translocate the tRNAs correctly. Binds to ribosomes in a GTP-dependent manner. The chain is Elongation factor 4 from Shewanella piezotolerans (strain WP3 / JCM 13877).